Consider the following 100-residue polypeptide: Large ribosomal subunit protein uL23 (100 aa).

Belongs to the universal ribosomal protein uL23 family. As to quaternary structure, part of the 50S ribosomal subunit. Contacts protein L29, and trigger factor when it is bound to the ribosome.

Functionally, one of the early assembly proteins it binds 23S rRNA. One of the proteins that surrounds the polypeptide exit tunnel on the outside of the ribosome. Forms the main docking site for trigger factor binding to the ribosome. The chain is Large ribosomal subunit protein uL23 from Proteus mirabilis (strain HI4320).